An 868-amino-acid chain; its full sequence is Leucine--tRNA ligase (868 aa).

Positions 42–52 (PYPSGKLHMGH) match the 'HIGH' region motif. A 'KMSKS' region motif is present at residues 627 to 631 (KMSKS). Residue Lys-630 participates in ATP binding.

This sequence belongs to the class-I aminoacyl-tRNA synthetase family.

It is found in the cytoplasm. It carries out the reaction tRNA(Leu) + L-leucine + ATP = L-leucyl-tRNA(Leu) + AMP + diphosphate. The protein is Leucine--tRNA ligase of Pseudomonas syringae pv. syringae (strain B728a).